The chain runs to 432 residues: Meiotically up-regulated gene 134 protein (432 aa).

The protein belongs to the UPF0300 family.

It is found in the cytoplasm. Its subcellular location is the cell cortex. In terms of biological role, has a role in meiosis. This Schizosaccharomyces pombe (strain 972 / ATCC 24843) (Fission yeast) protein is Meiotically up-regulated gene 134 protein (mug134).